A 986-amino-acid chain; its full sequence is Resact receptor (986 aa).

The first 21 residues, 1–21 (MATTRLLFLLVVAVMITMVRS), serve as a signal peptide directing secretion. Residues 22 to 507 (ATLHYNPTVI…GELCTNWGLY (486 aa)) lie on the Extracellular side of the membrane. N-linked (GlcNAc...) asparagine glycans are attached at residues Asn185, Asn361, and Asn410. The chain crosses the membrane as a helical span at residues 508–528 (LGTLIPAFIIIFGGGLGYYIY). Residues 529-986 (RKRAYEAALD…SHSCSALHSS (458 aa)) are Cytoplasmic-facing. Residues 568-836 (LSAISVISNA…PNIIEVRTML (269 aa)) enclose the Protein kinase domain.

The protein localises to the membrane. The catalysed reaction is GTP = 3',5'-cyclic GMP + diphosphate. Its function is as follows. Implicated as a cell-surface receptor on spermatozoa for 'resact' a chemotactic peptide, and on various other cells as a receptor for atrial natriuretic peptide. This Arbacia punctulata (Punctuate sea urchin) protein is Resact receptor.